The primary structure comprises 305 residues: Ribosomal RNA small subunit methyltransferase H (305 aa).

S-adenosyl-L-methionine contacts are provided by residues Gly-33 to His-35, Asp-52, Asp-97, and Gln-104.

The protein belongs to the methyltransferase superfamily. RsmH family.

It localises to the cytoplasm. The catalysed reaction is cytidine(1402) in 16S rRNA + S-adenosyl-L-methionine = N(4)-methylcytidine(1402) in 16S rRNA + S-adenosyl-L-homocysteine + H(+). Specifically methylates the N4 position of cytidine in position 1402 (C1402) of 16S rRNA. This chain is Ribosomal RNA small subunit methyltransferase H, found in Campylobacter lari (strain RM2100 / D67 / ATCC BAA-1060).